We begin with the raw amino-acid sequence, 207 residues long: Large ribosomal subunit protein uL4 (207 aa).

The disordered stretch occupies residues 49–78; it reads HAVKNRSAVSGGGRKPWRQKGTGRARQGSI.

It belongs to the universal ribosomal protein uL4 family. As to quaternary structure, part of the 50S ribosomal subunit.

One of the primary rRNA binding proteins, this protein initially binds near the 5'-end of the 23S rRNA. It is important during the early stages of 50S assembly. It makes multiple contacts with different domains of the 23S rRNA in the assembled 50S subunit and ribosome. Functionally, forms part of the polypeptide exit tunnel. The sequence is that of Large ribosomal subunit protein uL4 from Streptococcus pyogenes serotype M49 (strain NZ131).